The sequence spans 765 residues: Myotubularin-related protein 10-A (765 aa).

The Myotubularin phosphatase domain occupies 209–650; that stretch reads FETYSDWDRE…THIKLWKLCY (442 aa).

This sequence belongs to the protein-tyrosine phosphatase family. Non-receptor class myotubularin subfamily.

This Xenopus laevis (African clawed frog) protein is Myotubularin-related protein 10-A (mtmr10-a).